We begin with the raw amino-acid sequence, 338 residues long: Methionine import ATP-binding protein MetN 2 (338 aa).

An ABC transporter domain is found at 2–242 (IEIEKVCVDF…PQHAFTQQLV (241 aa)). 39–46 (GTSGAGKS) contacts ATP.

The protein belongs to the ABC transporter superfamily. Methionine importer (TC 3.A.1.24) family. In terms of assembly, the complex is composed of two ATP-binding proteins (MetN), two transmembrane proteins (MetI) and a solute-binding protein (MetQ).

It localises to the cell inner membrane. It carries out the reaction L-methionine(out) + ATP + H2O = L-methionine(in) + ADP + phosphate + H(+). The catalysed reaction is D-methionine(out) + ATP + H2O = D-methionine(in) + ADP + phosphate + H(+). Its function is as follows. Part of the ABC transporter complex MetNIQ involved in methionine import. Responsible for energy coupling to the transport system. This Salmonella paratyphi A (strain ATCC 9150 / SARB42) protein is Methionine import ATP-binding protein MetN 2.